A 154-amino-acid polypeptide reads, in one-letter code: Plastocyanin, chloroplastic (154 aa).

Residues Met-1–Ala-57 constitute a chloroplast transit peptide. In terms of domain architecture, Plastocyanin-like spans Gln-58–Asn-154. His-94, Cys-139, His-142, and Met-147 together coordinate Cu cation.

The protein belongs to the plastocyanin family. The cofactor is Cu(2+).

It localises to the plastid. The protein resides in the chloroplast thylakoid membrane. Functionally, participates in electron transfer between P700 and the cytochrome b6-f complex in photosystem I. The sequence is that of Plastocyanin, chloroplastic (PETE) from Oryza sativa subsp. indica (Rice).